The sequence spans 220 residues: MNIPLVVRRLGVQDYNQVWRQMQDFTDQRNENTPDEIWLVQHPPVFTQGQAGKPEHLLNPGAIPVVRSDRGGQITYHGPGQQIMYVLIDIKRGKAYGRDISVRQLVSALEQSVVKTLAGYGVNAYPKAEAPGVYVNTDGQEKKICSLGLRIRHGCSFHGLALNINMDLTPFHHINPCGYAGLEMCQLADFVENGEADCDEVSPKLVTHFAEILGYNATKF.

One can recognise a BPL/LPL catalytic domain in the interval 31–217 (ENTPDEIWLV…HFAEILGYNA (187 aa)). Substrate is bound by residues 70–77 (RGGQITYH), 146–148 (SLG), and 159–161 (GLA). Cys-177 serves as the catalytic Acyl-thioester intermediate.

The protein belongs to the LipB family.

The protein localises to the cytoplasm. It catalyses the reaction octanoyl-[ACP] + L-lysyl-[protein] = N(6)-octanoyl-L-lysyl-[protein] + holo-[ACP] + H(+). It functions in the pathway protein modification; protein lipoylation via endogenous pathway; protein N(6)-(lipoyl)lysine from octanoyl-[acyl-carrier-protein]: step 1/2. Catalyzes the transfer of endogenously produced octanoic acid from octanoyl-acyl-carrier-protein onto the lipoyl domains of lipoate-dependent enzymes. Lipoyl-ACP can also act as a substrate although octanoyl-ACP is likely to be the physiological substrate. The chain is Octanoyltransferase from Actinobacillus succinogenes (strain ATCC 55618 / DSM 22257 / CCUG 43843 / 130Z).